The primary structure comprises 211 residues: Large ribosomal subunit protein uL3 (211 aa).

Positions 122–156 (NQKRNNFGRGPMSHGSKNHRAPGSIGAGTTPGRVY) are disordered.

The protein belongs to the universal ribosomal protein uL3 family. In terms of assembly, part of the 50S ribosomal subunit. Forms a cluster with proteins L14 and L19.

One of the primary rRNA binding proteins, it binds directly near the 3'-end of the 23S rRNA, where it nucleates assembly of the 50S subunit. The sequence is that of Large ribosomal subunit protein uL3 from Nostoc sp. (strain PCC 7120 / SAG 25.82 / UTEX 2576).